A 365-amino-acid polypeptide reads, in one-letter code: Phosphoserine aminotransferase (365 aa).

Residue Arg42 coordinates L-glutamate. Pyridoxal 5'-phosphate contacts are provided by residues Gly76 to Arg77, Trp102, Thr156, Asp175, and Gln198. Lys199 bears the N6-(pyridoxal phosphate)lysine mark. Asn240–Thr241 lines the pyridoxal 5'-phosphate pocket.

Belongs to the class-V pyridoxal-phosphate-dependent aminotransferase family. SerC subfamily. As to quaternary structure, homodimer. The cofactor is pyridoxal 5'-phosphate.

It is found in the cytoplasm. It catalyses the reaction O-phospho-L-serine + 2-oxoglutarate = 3-phosphooxypyruvate + L-glutamate. It carries out the reaction 4-(phosphooxy)-L-threonine + 2-oxoglutarate = (R)-3-hydroxy-2-oxo-4-phosphooxybutanoate + L-glutamate. The protein operates within amino-acid biosynthesis; L-serine biosynthesis; L-serine from 3-phospho-D-glycerate: step 2/3. It participates in cofactor biosynthesis; pyridoxine 5'-phosphate biosynthesis; pyridoxine 5'-phosphate from D-erythrose 4-phosphate: step 3/5. Catalyzes the reversible conversion of 3-phosphohydroxypyruvate to phosphoserine and of 3-hydroxy-2-oxo-4-phosphonooxybutanoate to phosphohydroxythreonine. This chain is Phosphoserine aminotransferase, found in Shewanella oneidensis (strain ATCC 700550 / JCM 31522 / CIP 106686 / LMG 19005 / NCIMB 14063 / MR-1).